The following is a 399-amino-acid chain: Acetate kinase (399 aa).

Mg(2+) is bound at residue asparagine 7. Lysine 14 contacts ATP. Arginine 89 provides a ligand contact to substrate. The active-site Proton donor/acceptor is aspartate 146. ATP is bound by residues 206–210 (HIGSG), 280–282 (DFR), and 328–332 (GIGEN). Position 382 (glutamate 382) interacts with Mg(2+).

Belongs to the acetokinase family. As to quaternary structure, homodimer. The cofactor is Mg(2+). It depends on Mn(2+) as a cofactor.

It is found in the cytoplasm. It carries out the reaction acetate + ATP = acetyl phosphate + ADP. It functions in the pathway metabolic intermediate biosynthesis; acetyl-CoA biosynthesis; acetyl-CoA from acetate: step 1/2. Its function is as follows. Catalyzes the formation of acetyl phosphate from acetate and ATP. Can also catalyze the reverse reaction. The protein is Acetate kinase of Campylobacter hominis (strain ATCC BAA-381 / DSM 21671 / CCUG 45161 / LMG 19568 / NCTC 13146 / CH001A).